A 147-amino-acid polypeptide reads, in one-letter code: Hemoglobin subunit gamma (147 aa).

Positions 3-147 constitute a Globin domain; the sequence is HFTAEEKAII…VATALAHKYH (145 aa). Heme b is bound by residues histidine 64 and histidine 93.

This sequence belongs to the globin family. In terms of assembly, heterotetramer of two alpha chains and two gamma chains in fetal hemoglobin (Hb F). Red blood cells.

Its function is as follows. Gamma chains make up the fetal hemoglobin F, in combination with alpha chains. This Otolemur crassicaudatus (Brown greater galago) protein is Hemoglobin subunit gamma (HBG).